We begin with the raw amino-acid sequence, 364 residues long: CLIP domain-containing serine protease B15 (364 aa).

An N-terminal signal peptide occupies residues Met1–Ala19. Residues Pro30–Cys89 enclose the Clip domain. 3 disulfide bridges follow: Cys31–Cys88, Cys41–Cys72, and Cys47–Cys89. N-linked (GlcNAc...) asparagine glycosylation occurs at Asn46. Residues Ile107–Phe359 form the Peptidase S1 domain. Asn131 is a glycosylation site (N-linked (GlcNAc...) asparagine). A disulfide bond links Cys137 and Cys153. His152 serves as the catalytic Charge relay system. 3 N-linked (GlcNAc...) asparagine glycosylation sites follow: Asn171, Asn177, and Asn206. Asp212 serves as the catalytic Charge relay system. A disulfide bridge connects residues Cys279 and Cys296. Asn287 and Asn301 each carry an N-linked (GlcNAc...) asparagine glycan. Cys306 and Cys335 are disulfide-bonded. Ser310 acts as the Charge relay system in catalysis.

Belongs to the peptidase S1 family. CLIP subfamily. In terms of processing, N-glycosylated. Proteolytically cleaved. In terms of tissue distribution, expressed by a subpopulation of hemocytes.

It localises to the secreted. Functionally, serine protease. Plays a role in innate immunity against infections by parasite P.berghei and by Gram-negative bacteria such as E.coli. In response to P.berghei infection, contributes to the clearing of parasite ookinetes independent of melanization, an innate immune response which consists in the deposition of melanin pigments on invading pathogens and parasites. This is CLIP domain-containing serine protease B15 from Anopheles gambiae (African malaria mosquito).